The primary structure comprises 197 residues: Phospholipid hydroperoxide glutathione peroxidase (197 aa).

The residue at position 40 (Ser-40) is a Phosphoserine. Residue Sec-73 is part of the active site. A non-standard amino acid (selenocysteine) is located at residue Sec-73.

Belongs to the glutathione peroxidase family. As to quaternary structure, monomer. Has a tendency to form higher mass oligomers. Interacts with FUNDC1; this interaction promotes GPX4 recruitment into mitochondria through TOM/TIM complex where it is degraded by mitophagy.

The protein localises to the mitochondrion. Its subcellular location is the cytoplasm. The enzyme catalyses a hydroperoxy polyunsaturated fatty acid + 2 glutathione = a hydroxy polyunsaturated fatty acid + glutathione disulfide + H2O. It catalyses the reaction 2 glutathione + H2O2 = glutathione disulfide + 2 H2O. The catalysed reaction is tert-butyl hydroperoxide + 2 glutathione = tert-butanol + glutathione disulfide + H2O. It carries out the reaction cumene hydroperoxide + 2 glutathione = 2-phenylpropan-2-ol + glutathione disulfide + H2O. The enzyme catalyses (9S)-hydroperoxy-(10E,12Z)-octadecadienoate + 2 glutathione = (9S)-hydroxy-(10E,12Z)-octadecadienoate + glutathione disulfide + H2O. It catalyses the reaction (13S)-hydroperoxy-(9Z,11E)-octadecadienoate + 2 glutathione = (13S)-hydroxy-(9Z,11E)-octadecadienoate + glutathione disulfide + H2O. The catalysed reaction is (5S)-hydroperoxy-(6E,8Z,11Z,14Z)-eicosatetraenoate + 2 glutathione = (5S)-hydroxy-(6E,8Z,11Z,14Z)-eicosatetraenoate + glutathione disulfide + H2O. It carries out the reaction (12R)-hydroperoxy-(5Z,8Z,10E,14Z)-eicosatetraenoate + 2 glutathione = (12R)-hydroxy-(5Z,8Z,10E,14Z)-eicosatetraenoate + glutathione disulfide + H2O. The enzyme catalyses (12S)-hydroperoxy-(5Z,8Z,10E,14Z)-eicosatetraenoate + 2 glutathione = (12S)-hydroxy-(5Z,8Z,10E,14Z)-eicosatetraenoate + glutathione disulfide + H2O. It catalyses the reaction (15S)-hydroperoxy-(5Z,8Z,11Z,13E)-eicosatetraenoate + 2 glutathione = (15S)-hydroxy-(5Z,8Z,11Z,13E)-eicosatetraenoate + glutathione disulfide + H2O. The catalysed reaction is (5S)-hydroperoxy-(6E,8Z,11Z,14Z,17Z)-eicosapentaenoate + 2 glutathione = (5S)-hydroxy-(6E,8Z,11Z,14Z,17Z)-eicosapentaenoate + glutathione disulfide + H2O. It carries out the reaction (12S)-hydroperoxy-(5Z,8Z,10E,14Z,17Z)-eicosapentaenoate + 2 glutathione = (12S)-hydroxy-(5Z,8Z,10E,14Z,17Z)-eicosapentaenoate + glutathione disulfide + H2O. The enzyme catalyses (15S)-hydroperoxy-(5Z,8Z,11Z,13E,17Z)-eicosapentaenoate + 2 glutathione = (15S)-hydroxy-(5Z,8Z,11Z,13E,17Z)-eicosapentaenoate + glutathione disulfide + H2O. It catalyses the reaction (15S)-hydroperoxy-(11Z,13E)-eicosadienoate + 2 glutathione = (15S)-hydroxy-(11Z,13E)-eicosadienoate + glutathione disulfide + H2O. The catalysed reaction is (17S)-hydroperoxy-(4Z,7Z,10Z,13Z,15E,19Z)-docosahexaenoate + 2 glutathione = (17S)-hydroxy-(4Z,7Z,10Z,13Z,15E,19Z)-docosahexaenoate + glutathione disulfide + H2O. It carries out the reaction a hydroperoxy-1,2-diacyl-glycero-3-phosphocholine + 2 glutathione = a hydroxy-1,2-diacyl-glycero-3-phosphocholine + glutathione disulfide + H2O. In terms of biological role, essential antioxidant peroxidase that directly reduces phospholipid hydroperoxide even if they are incorporated in membranes and lipoproteins. Can also reduce fatty acid hydroperoxide, cholesterol hydroperoxide and thymine hydroperoxide. Plays a key role in protecting cells from oxidative damage by preventing membrane lipid peroxidation. Required to prevent cells from ferroptosis, a non-apoptotic cell death resulting from an iron-dependent accumulation of lipid reactive oxygen species. The presence of selenocysteine (Sec) versus Cys at the active site is essential for life: it provides resistance to overoxidation and prevents cells against ferroptosis. The presence of Sec at the active site is also essential for the survival of a specific type of parvalbumin-positive interneurons, thereby preventing against fatal epileptic seizures. May be required to protect cells from the toxicity of ingested lipid hydroperoxides. Required for normal sperm development and male fertility. Essential for maturation and survival of photoreceptor cells. Plays a role in a primary T-cell response to viral and parasitic infection by protecting T-cells from ferroptosis and by supporting T-cell expansion. Plays a role of glutathione peroxidase in platelets in the arachidonic acid metabolism. Reduces hydroperoxy ester lipids formed by a 15-lipoxygenase that may play a role as down-regulator of the cellular 15-lipoxygenase pathway. Can also reduce small soluble hydroperoxides such as H2O2, cumene hydroperoxide and tert-butyl hydroperoxide. This Pongo pygmaeus (Bornean orangutan) protein is Phospholipid hydroperoxide glutathione peroxidase.